The following is a 451-amino-acid chain: Phenylalanine-4-hydroxylase (451 aa).

At serine 16 the chain carries Phosphoserine; by PKA. In terms of domain architecture, ACT spans 35-113; it reads SLIFSLKEEV…TVHELSRDKK (79 aa). Residues histidine 284, histidine 289, and glutamate 329 each coordinate Fe cation.

The protein belongs to the biopterin-dependent aromatic amino acid hydroxylase family. In terms of assembly, homodimer and homotetramer. Fe(2+) is required as a cofactor. In terms of processing, phosphorylation at Ser-16 increases basal activity and facilitates activation by the substrate phenylalanine.

It carries out the reaction (6R)-L-erythro-5,6,7,8-tetrahydrobiopterin + L-phenylalanine + O2 = (4aS,6R)-4a-hydroxy-L-erythro-5,6,7,8-tetrahydrobiopterin + L-tyrosine. The protein operates within amino-acid degradation; L-phenylalanine degradation; acetoacetate and fumarate from L-phenylalanine: step 1/6. With respect to regulation, N-terminal region of PAH is thought to contain allosteric binding sites for phenylalanine and to constitute an 'inhibitory' domain that regulates the activity of a catalytic domain in the C-terminal portion of the molecule. Catalyzes the hydroxylation of L-phenylalanine to L-tyrosine. This Bos taurus (Bovine) protein is Phenylalanine-4-hydroxylase (PAH).